Here is a 567-residue protein sequence, read N- to C-terminus: WD repeat-containing protein 20 (567 aa).

N-acetylalanine is present on Ala-2. WD repeat units follow at residues 147 to 187 (IDKS…GTTA), 216 to 257 (VGEG…GTMK), 258 to 297 (SYFGGLLCLCWSPDGKYIVTGGEDDLVTVWSFLDCRVIAR), and 345 to 389 (STQS…LFPH). 2 positions are modified to phosphoserine: Ser-355 and Ser-358. Residues 408 to 441 (PAGSNGSAVTTPGNSVPPPLPRSNSLPHSAVSNA) are disordered. Composition is skewed to polar residues over residues 411-421 (SNGSAVTTPGN) and 429-441 (RSNSLPHSAVSNA). 3 positions are modified to phosphoserine: Ser-430, Ser-432, and Ser-463. The span at 468–481 (KERHHEKDRKRNHS) shows a compositional bias: basic residues. The tract at residues 468 to 493 (KERHHEKDRKRNHSMGHISSKSSDKL) is disordered. The WD 5 repeat unit spans residues 529-566 (IAHERLTVLVFLEDCIVTACQEGFICTWARPGKVSKFQ).

In terms of assembly, interacts with USP12; promotes translocation of USP12/WDR20 to the plasma membrane. Component of the USP12/WDR20/WDR48 deubiquitinating complex. Interacts with USP46; contributes to the cytoplasmic localization of the USP46/WDR20 complex. Component of the USP12/DMWD/WDR48 deubiquitinating complex.

The protein resides in the cytoplasm. The protein localises to the nucleus. Functionally, regulator of deubiquitinating complexes. Activates deubiquitinating activity of complexes containing USP12. Anchors at the base of the ubiquitin-contacting loop of USP12 and remotely modulates the catalytic center of the enzyme. Regulates shuttling of complexes containing USP12 between the plasma membrane, cytoplasm and nucleus. The protein is WD repeat-containing protein 20 (Wdr20) of Mus musculus (Mouse).